The primary structure comprises 222 residues: Collectrin (222 aa).

The N-terminal stretch at 1-14 (MLWALFFLVTTIHA) is a signal peptide. Residues 15–141 (ELCRPDAENA…LAPPMDPSVP (127 aa)) are Extracellular-facing. A Collectrin-like domain is found at 21-222 (AENAFKVRLS…LTEDERLTPL (202 aa)). Asn76 and Asn93 each carry an N-linked (GlcNAc...) asparagine glycan. The helical transmembrane segment at 142-162 (VWIIVFGVIFCIVTVAIALLV) threads the bilayer. At 163 to 222 (LSGIRQRRRNKKGPPGVEDAEDKCENIITIENGIPCDPLDMKGGHINDGFLTEDERLTPL) the chain is on the cytoplasmic side. Phosphothreonine is present on residues Thr214 and Thr220.

It belongs to the CLTRN family. In terms of assembly, monomer. Homodimer; dimerization prevents CLTRN cleavage by BACE2. Interacts with SLC6A18; this interaction regulates the trafficking of SLC6A18 to the cell membrane and its amino acid transporter activity. Interacts with SLC6A19; this interaction regulates the trafficking of SLC6A19 to the cell membrane and its amino acid transporter activity. Interacts with SNAPIN. In terms of processing, glycosylated. Glycosylation is required for plasma membrane localization and for its cleavage by BACE2. Proteolytically processed in pancreatic beta cells by BACE2 leading to the generation and extracellular release of soluble CLTRN, and a corresponding cell-associated C-terminal fragment which is later cleaved by gamma-secretase. This shedding process inactivates CLTRN. Three cleavage sites have been identified for BACE2, two clustered sites after Phe-116 and Leu-118 and a more membrane proximal site at Phe-125; the preferred BACE2 cleavage site seems to be between Phe-125 and Leu-126, Phe-116 and Leu-118 act as alternative sites. In terms of tissue distribution, kidney; collecting ducts. Pancreas; beta cells of islets.

The protein resides in the cell membrane. Its function is as follows. Plays an important role in amino acid transport by acting as binding partner of amino acid transporters SLC6A18 and SLC6A19, regulating their trafficking on the cell surface and their activity. May also play a role in trafficking of amino acid transporters SLC3A1 and SLC7A9 to the renal cortical cell membrane. Regulator of SNARE complex function. Stimulator of beta cell replication. This Rattus norvegicus (Rat) protein is Collectrin.